Reading from the N-terminus, the 231-residue chain is Ribose-5-phosphate isomerase A (231 aa).

Substrate-binding positions include 28-31 (TGST), 83-86 (DGAD), and 96-99 (KGGG). The active-site Proton acceptor is the glutamate 105. Lysine 123 is a binding site for substrate.

The protein belongs to the ribose 5-phosphate isomerase family. As to quaternary structure, homodimer.

The catalysed reaction is aldehydo-D-ribose 5-phosphate = D-ribulose 5-phosphate. The protein operates within carbohydrate degradation; pentose phosphate pathway; D-ribose 5-phosphate from D-ribulose 5-phosphate (non-oxidative stage): step 1/1. In terms of biological role, catalyzes the reversible conversion of ribose-5-phosphate to ribulose 5-phosphate. This Parvibaculum lavamentivorans (strain DS-1 / DSM 13023 / NCIMB 13966) protein is Ribose-5-phosphate isomerase A.